The sequence spans 288 residues: Elongation factor Ts (288 aa).

The interval 82–85 (TDFV) is involved in Mg(2+) ion dislocation from EF-Tu.

It belongs to the EF-Ts family.

It is found in the cytoplasm. Associates with the EF-Tu.GDP complex and induces the exchange of GDP to GTP. It remains bound to the aminoacyl-tRNA.EF-Tu.GTP complex up to the GTP hydrolysis stage on the ribosome. The chain is Elongation factor Ts from Chlorobium limicola (strain DSM 245 / NBRC 103803 / 6330).